We begin with the raw amino-acid sequence, 384 residues long: MRFRARVSQSTAKCVVFTGGGTGGHIFPGIAVFQALAQQAAVRVVWIGAARGADRSIVESAGLEFCGITAGKWRRYASVRNFFDVFRVLVGTVQSYCILRALRPQALFSKGGFVSVPPCIAAWLLRIPVVTHESDISPGLATRINARFADRILVSYPHTSCYFPRARRAAVHCTGNPVRQDFFSAQAERAYQFLRIDQKKPLLTVLGGSSGARDLNARVLSCSTFLTERFYLVHQFGAGNEDQMHTITNSLSVNARHAYMSFPFIQAHLPDILAASALVLSRAGANAVWECAVLGKPMILFPLERGSSRGDQIENAEYFSAHGAACILRAQDEKGHQLVSLLTELFHPSCARIEEMARASYTLGIGNAAYDIAQQLQTFIKEGM.

Residues 22-24 (TGG), Arg179, Ser209, and Gln312 each bind UDP-N-acetyl-alpha-D-glucosamine.

The protein belongs to the glycosyltransferase 28 family. MurG subfamily.

The protein resides in the cell inner membrane. The enzyme catalyses di-trans,octa-cis-undecaprenyl diphospho-N-acetyl-alpha-D-muramoyl-L-alanyl-D-glutamyl-meso-2,6-diaminopimeloyl-D-alanyl-D-alanine + UDP-N-acetyl-alpha-D-glucosamine = di-trans,octa-cis-undecaprenyl diphospho-[N-acetyl-alpha-D-glucosaminyl-(1-&gt;4)]-N-acetyl-alpha-D-muramoyl-L-alanyl-D-glutamyl-meso-2,6-diaminopimeloyl-D-alanyl-D-alanine + UDP + H(+). The protein operates within cell wall biogenesis; peptidoglycan biosynthesis. In terms of biological role, cell wall formation. Catalyzes the transfer of a GlcNAc subunit on undecaprenyl-pyrophosphoryl-MurNAc-pentapeptide (lipid intermediate I) to form undecaprenyl-pyrophosphoryl-MurNAc-(pentapeptide)GlcNAc (lipid intermediate II). In Treponema pallidum (strain Nichols), this protein is UDP-N-acetylglucosamine--N-acetylmuramyl-(pentapeptide) pyrophosphoryl-undecaprenol N-acetylglucosamine transferase.